A 156-amino-acid chain; its full sequence is ATP synthase subunit b (156 aa).

Residues isoleucine 5–proline 27 traverse the membrane as a helical segment.

Belongs to the ATPase B chain family. F-type ATPases have 2 components, F(1) - the catalytic core - and F(0) - the membrane proton channel. F(1) has five subunits: alpha(3), beta(3), gamma(1), delta(1), epsilon(1). F(0) has three main subunits: a(1), b(2) and c(10-14). The alpha and beta chains form an alternating ring which encloses part of the gamma chain. F(1) is attached to F(0) by a central stalk formed by the gamma and epsilon chains, while a peripheral stalk is formed by the delta and b chains.

Its subcellular location is the cell inner membrane. F(1)F(0) ATP synthase produces ATP from ADP in the presence of a proton or sodium gradient. F-type ATPases consist of two structural domains, F(1) containing the extramembraneous catalytic core and F(0) containing the membrane proton channel, linked together by a central stalk and a peripheral stalk. During catalysis, ATP synthesis in the catalytic domain of F(1) is coupled via a rotary mechanism of the central stalk subunits to proton translocation. In terms of biological role, component of the F(0) channel, it forms part of the peripheral stalk, linking F(1) to F(0). The chain is ATP synthase subunit b from Francisella philomiragia subsp. philomiragia (strain ATCC 25017 / CCUG 19701 / FSC 153 / O#319-036).